Reading from the N-terminus, the 542-residue chain is Phosphoenolpyruvate carboxykinase (ATP) (542 aa).

The substrate site is built by Arg-67, Tyr-208, and Lys-214. ATP contacts are provided by residues Lys-214, His-233, and 249–257 (GLSGTGKTT). Mn(2+)-binding residues include Lys-214 and His-233. Asp-270 provides a ligand contact to Mn(2+). ATP contacts are provided by residues Glu-298, Arg-334, 450-451 (RI), and Thr-456. Arg-334 provides a ligand contact to substrate.

Belongs to the phosphoenolpyruvate carboxykinase (ATP) family. In terms of assembly, monomer. The cofactor is Mn(2+).

It localises to the cytoplasm. It carries out the reaction oxaloacetate + ATP = phosphoenolpyruvate + ADP + CO2. Its pathway is carbohydrate biosynthesis; gluconeogenesis. In terms of biological role, involved in the gluconeogenesis. Catalyzes the conversion of oxaloacetate (OAA) to phosphoenolpyruvate (PEP) through direct phosphoryl transfer between the nucleoside triphosphate and OAA. The chain is Phosphoenolpyruvate carboxykinase (ATP) from Vibrio cholerae serotype O1 (strain ATCC 39541 / Classical Ogawa 395 / O395).